Reading from the N-terminus, the 322-residue chain is Tropinone reductase homolog At2g29260, chloroplastic (322 aa).

Residues 1–61 constitute a chloroplast transit peptide; sequence MVLDMASHLY…YASQSSIAIT (61 aa). 74–98 provides a ligand contact to NADP(+); that stretch reads LVTGGTRGIGRAIVEELAGLGAEVH. Ser-207 serves as a coordination point for substrate.

The protein belongs to the short-chain dehydrogenases/reductases (SDR) family. SDR65C subfamily.

Its subcellular location is the plastid. The protein localises to the chloroplast. This is Tropinone reductase homolog At2g29260, chloroplastic from Arabidopsis thaliana (Mouse-ear cress).